The following is a 212-amino-acid chain: Transcriptional regulator GfcR (212 aa).

This sequence belongs to the purine/pyrimidine phosphoribosyltransferase family. GfcR subfamily.

In terms of biological role, DNA-binding transcriptional regulator that functions as a regulator of central sugar catabolic pathways. This chain is Transcriptional regulator GfcR, found in Halobacterium salinarum (strain ATCC 29341 / DSM 671 / R1).